Here is a 204-residue protein sequence, read N- to C-terminus: Prephenate decarboxylase (204 aa).

Belongs to the prephenate decarboxylase family.

The protein resides in the cytoplasm. It carries out the reaction prephenate + H(+) = 3-[(4R)-4-hydroxycyclohexa-1,5-dien-1-yl]-2-oxopropanoate + CO2. It participates in antibiotic biosynthesis; bacilysin biosynthesis. Its function is as follows. Part of the bacABCDEF operon responsible for the biosynthesis of the nonribosomally synthesized dipeptide antibiotic bacilysin, composed of L-alanine and L-anticapsin. Bacilysin is an irreversible inactivator of the glutaminase domain of glucosamine synthetase. BacA is an unusual prephenate decarboxylase that avoids the typical aromatization of the cyclohexadienol ring of prephenate. BacA catalyzes the protonation of prephenate (1-carboxy-4-hydroxy-alpha-oxo-2,5-cyclohexadiene-1-propanoic acid) at C6 position, followed by a decarboxylation to produce the endocyclic-delta(4),delta(8)-7R-dihydro-hydroxyphenylpyruvate (en-H2HPP). En-H2HPP is able to undergo a slow nonenzymatic isomerization to produce the exocyclic-delta(3),delta(5)-dihydro-hydroxyphenylpyruvate (ex-H2HPP). BacA isomerizes only the pro-R double bond in prephenate. The polypeptide is Prephenate decarboxylase (Bacillus subtilis (strain 168)).